We begin with the raw amino-acid sequence, 677 residues long: Pre-mRNA-splicing factor CLF1 (677 aa).

HAT repeat units lie at residues 52 to 84, 86 to 118, 120 to 152, 154 to 185, 187 to 218, 220 to 255, 257 to 291, 301 to 333, 335 to 369, 379 to 415, 417 to 448, 450 to 482, 484 to 518, 520 to 551, 570 to 608, and 613 to 646; these read EYQG…WELE, KEFR…AEMK, RNIN…MEEM, GNIP…LEKR, NEFD…FEEE, GTSD…YEAK, KEFE…FEKQ, VILS…LEES, GDVE…LWIF, KDME…FEIR, MDLQ…LERQ, FEFV…LERG, DDID…FEEY, GEYD…FEIN, EAKR…FEQT, and DDIA…YMFP.

Belongs to the crooked-neck family. Associated with the spliceosome.

Its subcellular location is the nucleus. In terms of biological role, involved in pre-mRNA splicing and cell cycle progression. Required for the spliceosome assembly and initiation of the DNA replication. This Paracoccidioides brasiliensis protein is Pre-mRNA-splicing factor CLF1 (CLF1).